The sequence spans 451 residues: Trigger factor (451 aa).

In terms of domain architecture, PPIase FKBP-type spans 165-250 (DDKLTIDFEG…LRQIQAREAL (86 aa)).

It belongs to the FKBP-type PPIase family. Tig subfamily.

The protein localises to the cytoplasm. It catalyses the reaction [protein]-peptidylproline (omega=180) = [protein]-peptidylproline (omega=0). Involved in protein export. Acts as a chaperone by maintaining the newly synthesized protein in an open conformation. Functions as a peptidyl-prolyl cis-trans isomerase. The sequence is that of Trigger factor from Helicobacter pylori (strain Shi470).